The following is a 64-amino-acid chain: Translation machinery-associated protein 7 homolog (64 aa).

A disordered region spans residues 1–64 (MSGREGGKKK…QGGIKKSGKK (64 aa)). Residues 21–50 (EMDEDTAAFKAKQKEQQKALEAAKQKATKG) adopt a coiled-coil conformation. The segment covering 32–44 (KQKEQQKALEAAK) has biased composition (basic and acidic residues).

Belongs to the TMA7 family.

This chain is Translation machinery-associated protein 7 homolog, found in Anopheles gambiae (African malaria mosquito).